The chain runs to 824 residues: Glycogen phosphorylase (824 aa).

The residue at position 667 (K667) is an N6-(pyridoxal phosphate)lysine.

It belongs to the glycogen phosphorylase family. It depends on pyridoxal 5'-phosphate as a cofactor.

It catalyses the reaction [(1-&gt;4)-alpha-D-glucosyl](n) + phosphate = [(1-&gt;4)-alpha-D-glucosyl](n-1) + alpha-D-glucose 1-phosphate. Functionally, phosphorylase is an important allosteric enzyme in carbohydrate metabolism. Enzymes from different sources differ in their regulatory mechanisms and in their natural substrates. However, all known phosphorylases share catalytic and structural properties. The chain is Glycogen phosphorylase (glgP) from Chlamydia pneumoniae (Chlamydophila pneumoniae).